The following is a 226-amino-acid chain: Large ribosomal subunit protein uL1 (226 aa).

Belongs to the universal ribosomal protein uL1 family. Part of the 50S ribosomal subunit.

Its function is as follows. Binds directly to 23S rRNA. The L1 stalk is quite mobile in the ribosome, and is involved in E site tRNA release. Functionally, protein L1 is also a translational repressor protein, it controls the translation of the L11 operon by binding to its mRNA. The sequence is that of Large ribosomal subunit protein uL1 from Mycoplasma mycoides subsp. mycoides SC (strain CCUG 32753 / NCTC 10114 / PG1).